Here is a 589-residue protein sequence, read N- to C-terminus: Ufm1-specific protease (589 aa).

The interval 1–22 (MTNSQTVSLIGPTQMAPQSTPP) is disordered. Residues Cys421, Asp545, and His547 contribute to the active site.

The protein belongs to the peptidase C78 family. As to quaternary structure, interacts with odr-4. In terms of tissue distribution, expressed in head and tail neurons. Expressed in the amphid head neurons ADL, ASI, ASH, ASJ, ASG, ADF, ASK, AWA, AWB, AWC, and in two tail neurons, the phasmid tail neurons PHA and PHB.

It localises to the endoplasmic reticulum membrane. The protein localises to the cytoplasm. It is found in the perinuclear region. Functionally, thiol protease which recognizes and hydrolyzes the peptide bond at the C-terminal Gly of ufm-1, a ubiquitin-like modifier protein bound to a number of target proteins. Required, with oct-4, for the localization of a subset of 7 transmembrane domain odorant receptors, including odr-10, to the cilia of olfactory neurons AWA and AWC. Operates in aggregation behavior, and responses to oxygen levels. The protein is Ufm1-specific protease of Caenorhabditis elegans.